We begin with the raw amino-acid sequence, 278 residues long: Octanoyl-[GcvH]:protein N-octanoyltransferase (278 aa).

A BPL/LPL catalytic domain is found at 44-249; that stretch reads SQSPPTLRAW…TLQQHGASLL (206 aa). Catalysis depends on C148, which acts as the Acyl-thioester intermediate.

Belongs to the octanoyltransferase LipL family.

The enzyme catalyses N(6)-octanoyl-L-lysyl-[glycine-cleavage complex H protein] + L-lysyl-[lipoyl-carrier protein] = N(6)-octanoyl-L-lysyl-[lipoyl-carrier protein] + L-lysyl-[glycine-cleavage complex H protein]. Its pathway is protein modification; protein lipoylation via endogenous pathway; protein N(6)-(lipoyl)lysine from octanoyl-[acyl-carrier-protein]. Catalyzes the amidotransfer (transamidation) of the octanoyl moiety from octanoyl-GcvH to the lipoyl domain of the E2 subunit of lipoate-dependent enzymes. The protein is Octanoyl-[GcvH]:protein N-octanoyltransferase of Halalkalibacterium halodurans (strain ATCC BAA-125 / DSM 18197 / FERM 7344 / JCM 9153 / C-125) (Bacillus halodurans).